We begin with the raw amino-acid sequence, 61 residues long: Large ribosomal subunit protein uL30 (61 aa).

The protein belongs to the universal ribosomal protein uL30 family. As to quaternary structure, part of the 50S ribosomal subunit.

The polypeptide is Large ribosomal subunit protein uL30 (Bifidobacterium adolescentis (strain ATCC 15703 / DSM 20083 / NCTC 11814 / E194a)).